The following is a 315-amino-acid chain: BTB/POZ domain-containing adapter for CUL3-mediated RhoA degradation protein 3 (315 aa).

M1 is modified (N-acetylmethionine). Position 23 is a phosphoserine (S23). The BTB domain occupies 32-100 (KYVKLNVGGA…LRDGAVPLPE (69 aa)). The short motif at 239-245 (QTKVEFP) is the Interaction with PCNA element. A disordered region spans residues 269 to 294 (NALLEATGGAAGRSHHLDEDEERERE).

Belongs to the BACURD family. As to quaternary structure, homotetramer; forms a two-fold symmetric tetramer in solution. Interacts with CUL3; interaction is direct and forms a 5:5 heterodecamer. Component of the BCR(BACURD3) E3 ubiquitin ligase complex, at least composed of CUL3, KCTD10/BACURD3 and RBX1. Interacts with DNA polymerase delta subunit 2/POLD2. Interacts with PCNA. Expressed at highest levels in lung. Also detected in testis and heart. Very low expression, if any, in brain, liver, spleen, kidney and skeletal muscle.

It is found in the nucleus. It functions in the pathway protein modification; protein ubiquitination. In terms of biological role, substrate-specific adapter of a BCR (BTB-CUL3-RBX1) E3 ubiquitin-protein ligase complex. The BCR(BACURD3) E3 ubiquitin ligase complex mediates the ubiquitination of target proteins, leading to their degradation by the proteasome. The sequence is that of BTB/POZ domain-containing adapter for CUL3-mediated RhoA degradation protein 3 (Kctd10) from Rattus norvegicus (Rat).